Here is a 327-residue protein sequence, read N- to C-terminus: tRNA uridine(34) hydroxylase (327 aa).

Residues Asp-142 to Ser-240 form the Rhodanese domain. Cys-200 acts as the Cysteine persulfide intermediate in catalysis.

The protein belongs to the TrhO family.

The enzyme catalyses uridine(34) in tRNA + AH2 + O2 = 5-hydroxyuridine(34) in tRNA + A + H2O. Catalyzes oxygen-dependent 5-hydroxyuridine (ho5U) modification at position 34 in tRNAs. This Synechococcus sp. (strain CC9605) protein is tRNA uridine(34) hydroxylase.